We begin with the raw amino-acid sequence, 84 residues long: Large ribosomal subunit protein bL27 (84 aa).

A disordered region spans residues 1 to 20; sequence MAHKKSGGASRNGRDSNPKY.

It belongs to the bacterial ribosomal protein bL27 family.

The polypeptide is Large ribosomal subunit protein bL27 (Dictyoglomus thermophilum (strain ATCC 35947 / DSM 3960 / H-6-12)).